The primary structure comprises 874 residues: Endothelial PAS domain-containing protein 1 (874 aa).

The interval 1–23 is disordered; sequence MTADKEKKRSSSELRKEKSRDAA. The 54-residue stretch at 14 to 67 folds into the bHLH domain; that stretch reads LRKEKSRDAARCRRSKETEVFYELAHELPLPHSVSSHLDKASIMRLAISFLRTH. Positions 26–53 are DNA-binding; it reads RRSKETEVFYELAHELPLPHSVSSHLDK. Residues 84–154 form the PAS 1 domain; that stretch reads DQQMDNLYLK…ENLTLKNGSG (71 aa). The segment at 171-192 is required for heterodimer formation with ARNT; sequence RMKCTVTNRGRTVNLKSATWKV. The PAS 2 domain maps to 230–300; the sequence is QHPSHMDIPL…KSHQNLCTKG (71 aa). Positions 304–347 constitute a PAC domain; the sequence is SGQYRMLAKHGGYVWLETQGTVIYNPRNLQPQCIMCVNYVLSEI. At P405 the chain carries 4-hydroxyproline. The interval 438 to 489 is disordered; sequence WVSGLRSHSAQSESGSLPAFTVPQADTPGNTTPSASSSSSCSTPSSPEDYYS. The span at 443–452 shows a compositional bias: polar residues; it reads RSHSAQSESG. Over residues 464–484 the composition is skewed to low complexity; the sequence is TPGNTTPSASSSSSCSTPSSP. The tract at residues 495-541 is NTAD; that stretch reads LKIEVIEKLFAMDTEPRDPGSTQTDFSELDLETLAPYIPMDGEDFQL. 4-hydroxyproline is present on P530. Residues 777-803 are disordered; sequence LGQPLRHLPPPQPPSTRSSGENAKTGF. The interval 834–874 is CTAD; it reads SFEPYLLPELTRYDCEVNVPVPGSSTLLQGRDLLRALDQAT. T844 carries the phosphothreonine modification. Position 851 is a (3S)-3-hydroxyasparagine (N851).

As to quaternary structure, interacts with HIF3A isoform 2. Efficient DNA binding requires dimerization with another bHLH protein. Heterodimerizes with ARNT; heterodimer binds to core DNA sequence 5'-TACGTG-3' within the hypoxia response element (HRE) of target gene promoters. Interacts with CREBBP. Interacts with EGLN1. Interacts with VHL. Post-translationally, in normoxia, is probably hydroxylated on Pro-405 and Pro-530 by EGLN1/PHD1, EGLN2/PHD2 and/or EGLN3/PHD3. The hydroxylated prolines promote interaction with VHL, initiating rapid ubiquitination and subsequent proteasomal degradation. Under hypoxia, proline hydroxylation is impaired and ubiquitination is attenuated, resulting in stabilization. In terms of processing, in normoxia, is hydroxylated on Asn-851 by HIF1AN thus probably abrogating interaction with CREBBP and EP300 and preventing transcriptional activation. Phosphorylated on multiple sites in the CTAD. Post-translationally, the iron and 2-oxoglutarate dependent 3-hydroxylation of asparagine is (S) stereospecific within HIF CTAD domains. As to expression, expressed in most tissues, with highest levels in lung, followed by heart, kidney, brain and liver. Predominantly expressed in endothelial cells. Also found in smooth muscle cells of the uterus, neurons, and brown adipose tissue. High expression in embryonic choroid plexus and kidney glomeruli.

The protein localises to the nucleus. The protein resides in the nucleus speckle. Its function is as follows. Transcription factor involved in the induction of oxygen regulated genes. Heterodimerizes with ARNT; heterodimer binds to core DNA sequence 5'-TACGTG-3' within the hypoxia response element (HRE) of target gene promoters. Regulates the vascular endothelial growth factor (VEGF) expression and seems to be implicated in the development of blood vessels and the tubular system of lung. May also play a role in the formation of the endothelium that gives rise to the blood brain barrier. Potent activator of the Tie-2 tyrosine kinase expression. Activation requires recruitment of transcriptional coactivators such as CREBBP and probably EP300. Interaction with redox regulatory protein APEX seems to activate CTAD. This chain is Endothelial PAS domain-containing protein 1 (Epas1), found in Mus musculus (Mouse).